A 235-amino-acid chain; its full sequence is Large ribosomal subunit protein uL1 (235 aa).

It belongs to the universal ribosomal protein uL1 family. Part of the 50S ribosomal subunit.

In terms of biological role, binds directly to 23S rRNA. The L1 stalk is quite mobile in the ribosome, and is involved in E site tRNA release. Functionally, protein L1 is also a translational repressor protein, it controls the translation of the L11 operon by binding to its mRNA. The polypeptide is Large ribosomal subunit protein uL1 (Mycolicibacterium paratuberculosis (strain ATCC BAA-968 / K-10) (Mycobacterium paratuberculosis)).